A 193-amino-acid polypeptide reads, in one-letter code: Xanthine phosphoribosyltransferase (193 aa).

2 residues coordinate xanthine: L20 and T27. Residue 128–132 (ANGQA) coordinates 5-phospho-alpha-D-ribose 1-diphosphate. K156 is a xanthine binding site.

It belongs to the purine/pyrimidine phosphoribosyltransferase family. Xpt subfamily. In terms of assembly, homodimer.

Its subcellular location is the cytoplasm. It catalyses the reaction XMP + diphosphate = xanthine + 5-phospho-alpha-D-ribose 1-diphosphate. It participates in purine metabolism; XMP biosynthesis via salvage pathway; XMP from xanthine: step 1/1. In terms of biological role, converts the preformed base xanthine, a product of nucleic acid breakdown, to xanthosine 5'-monophosphate (XMP), so it can be reused for RNA or DNA synthesis. The sequence is that of Xanthine phosphoribosyltransferase from Streptococcus pyogenes serotype M5 (strain Manfredo).